Here is a 276-residue protein sequence, read N- to C-terminus: Acyl-[acyl-carrier-protein]--UDP-N-acetylglucosamine O-acyltransferase (276 aa).

Belongs to the transferase hexapeptide repeat family. LpxA subfamily. As to quaternary structure, homotrimer.

Its subcellular location is the cytoplasm. It catalyses the reaction a (3R)-hydroxyacyl-[ACP] + UDP-N-acetyl-alpha-D-glucosamine = a UDP-3-O-[(3R)-3-hydroxyacyl]-N-acetyl-alpha-D-glucosamine + holo-[ACP]. It participates in glycolipid biosynthesis; lipid IV(A) biosynthesis; lipid IV(A) from (3R)-3-hydroxytetradecanoyl-[acyl-carrier-protein] and UDP-N-acetyl-alpha-D-glucosamine: step 1/6. Involved in the biosynthesis of lipid A, a phosphorylated glycolipid that anchors the lipopolysaccharide to the outer membrane of the cell. In Gloeothece citriformis (strain PCC 7424) (Cyanothece sp. (strain PCC 7424)), this protein is Acyl-[acyl-carrier-protein]--UDP-N-acetylglucosamine O-acyltransferase.